Reading from the N-terminus, the 193-residue chain is Ribonuclease HII (193 aa).

The RNase H type-2 domain occupies 15–193; the sequence is YIVAGIDEAG…PYHRKSFKCC (179 aa). D21, E22, and D112 together coordinate a divalent metal cation.

The protein belongs to the RNase HII family. Mn(2+) serves as cofactor. Requires Mg(2+) as cofactor.

It is found in the cytoplasm. The catalysed reaction is Endonucleolytic cleavage to 5'-phosphomonoester.. In terms of biological role, endonuclease that specifically degrades the RNA of RNA-DNA hybrids. The chain is Ribonuclease HII from Rickettsia akari (strain Hartford).